We begin with the raw amino-acid sequence, 369 residues long: Aspartate beta-hydroxylase domain-containing protein 2 (369 aa).

At 1-58 the chain is on the cytoplasmic side; that stretch reads MVWAPLGPPRTDCLTLLHTPSKDSPKMSLEWLVAWSWSLDGLRDCIATGIQSVRDCDT. A helical transmembrane segment spans residues 59–79; the sequence is TAVITVACLLVLFVWYCYHVG. The Lumenal segment spans residues 80-369; the sequence is REQPRPYVSV…ALDFIFAPGR (290 aa). Asparagine 211 carries N-linked (GlcNAc...) asparagine glycosylation. 2-oxoglutarate-binding residues include tryptophan 228 and serine 272. Histidine 283 is a binding site for Fe cation. 2-oxoglutarate is bound at residue 292-294; it reads RCH. Histidine 328 contributes to the Fe cation binding site. Arginine 341 is a binding site for 2-oxoglutarate.

The protein belongs to the aspartyl/asparaginyl beta-hydroxylase family. Fe cation is required as a cofactor.

Its subcellular location is the membrane. Its function is as follows. May function as 2-oxoglutarate-dependent dioxygenase. The sequence is that of Aspartate beta-hydroxylase domain-containing protein 2 (ASPHD2) from Homo sapiens (Human).